A 1905-amino-acid polypeptide reads, in one-letter code: Low-density lipoprotein receptor-related protein 4 (1905 aa).

A signal peptide spans 1 to 20; that stretch reads MRRQWGALLLGALLCAHGLA. Residues 21–1725 lie on the Extracellular side of the membrane; it reads SSPECACGRS…AAPGEGLHIS (1705 aa). 8 consecutive LDL-receptor class A domains span residues 26-67, 70-106, 109-144, 147-183, 190-226, 230-266, 269-305, and 311-350; these read ACGR…DGCI, TCSPLDFHCDNGKCIRRSWVCDGDNDCEDDSDEQDCP, ECEEDEFPCQNGYCIRSLWHCDGDNDCGDNSDEQCD, KCSDKEFRCSDGSCIAEHWYCDGDTDCKDGSDEENCP, PCNLEEFQCAYGRCILDIYHCDGDDDCGDWSDESDCS, PCRSGEFMCDSGLCINAGWRCDGDADCDDQSDERNCT, MCTAEQFRCHSGRCVRLSWRCDGEDDCADNSDEENCE, and QCALDQFLCWNGRCIGQRKLCNGVNDCGDNSDESPQQNCR. Intrachain disulfides connect Cys27/Cys44, Cys34/Cys57, Cys51/Cys66, Cys71/Cys83, Cys78/Cys96, Cys90/Cys105, Cys110/Cys122, Cys117/Cys135, Cys129/Cys143, Cys148/Cys160, Cys155/Cys173, Cys167/Cys182, Cys191/Cys203, Cys198/Cys216, Cys210/Cys225, Cys231/Cys243, Cys238/Cys256, Cys250/Cys265, Cys270/Cys282, Cys277/Cys295, Cys289/Cys304, Cys312/Cys324, Cys319/Cys337, Cys331/Cys349, Cys358/Cys369, Cys365/Cys378, Cys380/Cys393, Cys399/Cys409, Cys405/Cys418, and Cys420/Cys433. Asn264 carries N-linked (GlcNAc...) asparagine glycosylation. The 41-residue stretch at 354 to 394 folds into the EGF-like 1; calcium-binding domain; the sequence is GEENCNVNNGGCAQKCQMVRGAVQCTCHTGYRLTEDGHTCQ. Positions 395–434 constitute an EGF-like 2; calcium-binding domain; sequence DVNECAEEGYCSQGCTNSEGAFQCWCETGYELRPDRRSCK. LDL-receptor class B repeat units lie at residues 480-522, 523-565, 566-609, 610-652, and 653-693; these read ELVF…DWVH, DKLY…HPME, GTIY…DYAG, RRMY…FEDS, and LYWT…LHPQ. Asn498 is a glycosylation site (N-linked (GlcNAc...) asparagine). Positions 698–737 constitute an EGF-like 3 domain; sequence GKNRCGDNNGGCTHLCLPSGQNYTCACPTGFRKISSHACA. Intrachain disulfides connect Cys702-Cys713, Cys709-Cys722, and Cys724-Cys736. Asn719 carries N-linked (GlcNAc...) asparagine glycosylation. LDL-receptor class B repeat units follow at residues 785 to 827, 828 to 870, 871 to 914, 915 to 956, and 957 to 998; these read DHVY…DWVT, NKLY…EPMG, GYMY…DYGS, QRLY…LYGE, and RIYW…FHRR. Asn901 is a glycosylation site (N-linked (GlcNAc...) asparagine). An N-linked (GlcNAc...) asparagine glycan is attached at Asn1077. LDL-receptor class B repeat units lie at residues 1093-1135, 1136-1178, 1179-1222, 1223-1263, 1264-1306, 1397-1439, 1440-1482, 1483-1526, 1527-1568, and 1569-1610; these read GKVY…DAIG, RKVY…YHEM, GFMY…DKAS, SQLL…LLDS, YIYW…DRAQ, GKVY…DWVA, RNLY…FPRK, GYLF…DYDT, RRIY…QDRW, and IYWT…SPQR. N-linked (GlcNAc...) asparagine glycans are attached at residues Asn1415 and Asn1467. Residues 1659-1686 are disordered; that stretch reads PRATGMSEKSPVLPNTPPTTLYSSTTRT. A compositionally biased stretch (low complexity) spans 1676-1686; sequence PTTLYSSTTRT. Residues 1726 to 1746 traverse the membrane as a helical segment; sequence YAIGGLLSILLILVVIAALML. Over 1747-1905 the chain is Cytoplasmic; sequence YRHKKSKFTD…ERKLSSESQV (159 aa). The Endocytosis signal signature appears at 1766–1769; it reads NPSY. Residues 1852–1905 form a disordered region; the sequence is ASSGSLDDTETEQLLQEEQSECSSVHTAATPERRGSLPDTGWKHERKLSSESQV. Over residues 1882 to 1905 the composition is skewed to basic and acidic residues; sequence PERRGSLPDTGWKHERKLSSESQV.

Belongs to the LDLR family. In terms of assembly, homooligomer. Interacts with MUSK; the heterodimer forms an AGRIN receptor complex that binds AGRIN resulting in activation of MUSK. Interacts (via the extracellular domain) with SOST; the interaction facilitates the inhibition of Wnt signaling. Interacts with MESD; the interaction promotes glycosylation of LRP4 and its cell-surface expression. In terms of tissue distribution, expressed in bone; present in osteoblasts and osteocytes. No expression is observed in osteoclast. Expressed in several regions of the brain.

The protein localises to the cell membrane. Mediates SOST-dependent inhibition of bone formation. Functions as a specific facilitator of SOST-mediated inhibition of Wnt signaling. Plays a key role in the formation and the maintenance of the neuromuscular junction (NMJ), the synapse between motor neuron and skeletal muscle. Directly binds AGRIN and recruits it to the MUSK signaling complex. Mediates the AGRIN-induced phosphorylation of MUSK, the kinase of the complex. The activation of MUSK in myotubes induces the formation of NMJ by regulating different processes including the transcription of specific genes and the clustering of AChR in the postsynaptic membrane. Alternatively, may be involved in the negative regulation of the canonical Wnt signaling pathway, being able to antagonize the LRP6-mediated activation of this pathway. More generally, has been proposed to function as a cell surface endocytic receptor binding and internalizing extracellular ligands for degradation by lysosomes. May play an essential role in the process of digit differentiation. The chain is Low-density lipoprotein receptor-related protein 4 (LRP4) from Homo sapiens (Human).